Reading from the N-terminus, the 346-residue chain is tRNA (guanine-N(7)-)-methyltransferase (346 aa).

Residues Gly-101 and 124 to 125 (EI) each bind S-adenosyl-L-methionine. The disordered stretch occupies residues 149–191 (LKSAGGGGSDAAPESPAAPPTPSEAASPDSTTPSEQQAPTTLV). Residues 171–182 (SEAASPDSTTPS) show a composition bias toward low complexity. S-adenosyl-L-methionine is bound by residues 204 to 205 (NT) and Cys-224. Residue Asp-227 is part of the active site. 318–320 (TEE) is a binding site for S-adenosyl-L-methionine.

It belongs to the class I-like SAM-binding methyltransferase superfamily. TrmB family. As to quaternary structure, forms a complex with trm82.

It localises to the nucleus. It catalyses the reaction guanosine(46) in tRNA + S-adenosyl-L-methionine = N(7)-methylguanosine(46) in tRNA + S-adenosyl-L-homocysteine. The protein operates within tRNA modification; N(7)-methylguanine-tRNA biosynthesis. Its function is as follows. Catalyzes the formation of N(7)-methylguanine at position 46 (m7G46) in tRNA. The polypeptide is tRNA (guanine-N(7)-)-methyltransferase (trm8) (Aspergillus terreus (strain NIH 2624 / FGSC A1156)).